A 358-amino-acid chain; its full sequence is Chorismate synthase (358 aa).

NADP(+) is bound at residue Arg47. FMN-binding positions include 124-126 (RSS), 240-241 (NA), Gly284, 299-303 (KPVAT), and Arg325.

Belongs to the chorismate synthase family. As to quaternary structure, homotetramer. It depends on FMNH2 as a cofactor.

It carries out the reaction 5-O-(1-carboxyvinyl)-3-phosphoshikimate = chorismate + phosphate. Its pathway is metabolic intermediate biosynthesis; chorismate biosynthesis; chorismate from D-erythrose 4-phosphate and phosphoenolpyruvate: step 7/7. Its function is as follows. Catalyzes the anti-1,4-elimination of the C-3 phosphate and the C-6 proR hydrogen from 5-enolpyruvylshikimate-3-phosphate (EPSP) to yield chorismate, which is the branch point compound that serves as the starting substrate for the three terminal pathways of aromatic amino acid biosynthesis. This reaction introduces a second double bond into the aromatic ring system. This is Chorismate synthase from Phocaeicola vulgatus (strain ATCC 8482 / DSM 1447 / JCM 5826 / CCUG 4940 / NBRC 14291 / NCTC 11154) (Bacteroides vulgatus).